Reading from the N-terminus, the 360-residue chain is Phosphoserine aminotransferase (360 aa).

Arg-41 lines the L-glutamate pocket. The pyridoxal 5'-phosphate site is built by Trp-101, Thr-152, Asp-172, and Gln-195. An N6-(pyridoxal phosphate)lysine modification is found at Lys-196. Pyridoxal 5'-phosphate is bound at residue 237–238; sequence NT.

It belongs to the class-V pyridoxal-phosphate-dependent aminotransferase family. SerC subfamily. Homodimer. Pyridoxal 5'-phosphate is required as a cofactor.

The protein localises to the cytoplasm. The catalysed reaction is O-phospho-L-serine + 2-oxoglutarate = 3-phosphooxypyruvate + L-glutamate. It catalyses the reaction 4-(phosphooxy)-L-threonine + 2-oxoglutarate = (R)-3-hydroxy-2-oxo-4-phosphooxybutanoate + L-glutamate. It participates in amino-acid biosynthesis; L-serine biosynthesis; L-serine from 3-phospho-D-glycerate: step 2/3. Its pathway is cofactor biosynthesis; pyridoxine 5'-phosphate biosynthesis; pyridoxine 5'-phosphate from D-erythrose 4-phosphate: step 3/5. In terms of biological role, catalyzes the reversible conversion of 3-phosphohydroxypyruvate to phosphoserine and of 3-hydroxy-2-oxo-4-phosphonooxybutanoate to phosphohydroxythreonine. In Burkholderia lata (strain ATCC 17760 / DSM 23089 / LMG 22485 / NCIMB 9086 / R18194 / 383), this protein is Phosphoserine aminotransferase.